The primary structure comprises 237 residues: Ribonuclease 3 (237 aa).

One can recognise an RNase III domain in the interval Ser3–Gly133. Glu43 serves as a coordination point for Mg(2+). The active site involves Asp47. Asp119 and Glu122 together coordinate Mg(2+). Glu122 is an active-site residue. Residues Asp160–Val228 form the DRBM domain.

This sequence belongs to the ribonuclease III family. As to quaternary structure, homodimer. Mg(2+) serves as cofactor.

The protein resides in the cytoplasm. It catalyses the reaction Endonucleolytic cleavage to 5'-phosphomonoester.. In terms of biological role, digests double-stranded RNA. Involved in the processing of primary rRNA transcript to yield the immediate precursors to the large and small rRNAs (23S and 16S). Processes some mRNAs, and tRNAs when they are encoded in the rRNA operon. Processes pre-crRNA and tracrRNA of type II CRISPR loci if present in the organism. This is Ribonuclease 3 from Mycolicibacterium paratuberculosis (strain ATCC BAA-968 / K-10) (Mycobacterium paratuberculosis).